The primary structure comprises 395 residues: Transcriptional coactivator yorkie (395 aa).

Residues 73–100 (NSFFTPPAPSHSRANSADSTYDAGSQSS) are disordered. Phosphoserine occurs at positions 82, 88, 100, 117, and 145. Residues 84 to 100 (SRANSADSTYDAGSQSS) show a composition bias toward polar residues. Disordered regions lie at residues 129 to 150 (PSPQ…PASL) and 162 to 199 (AAAA…PASS). At Ser-146 the chain carries Phosphoserine; by CDK7. Ser-149 is modified (phosphoserine). Low complexity predominate over residues 162–179 (AAAANNPNANPSSQQQPA). At Ser-227 the chain carries Phosphoserine. At Tyr-228 the chain carries Phosphotyrosine. At Ser-232 the chain carries Phosphoserine. WW domains are found at residues 241 to 274 (GALP…DPRI) and 310 to 343 (GPLP…DPRM).

The protein belongs to the YAP1 family. In terms of assembly, interacts (via WW domains) with wts. Interacts (via N-terminus) with sd (via C-terminus) and this interaction enhances the transcriptional activity of sd. The phosphorylated form interacts with 14-3-3epsilon and 14-3-3zeta. Interacts with Ack and ex. In terms of processing, its activity is regulated by multiple phosphorylation events. Phosphorylation at Ser-88, Ser-145 and Ser-227 negatively regulate its activity and restrict its nuclear localization. Wts-mediated phosphorylation at Ser-145 promotes interaction with 14-3-3epsilon and 14-3-3zeta. Phosphorylation at Ser-88 and Ser-227 regulate nuclear localization and activity independent of 14-3-3 association. Phosphorylation at Ser-146 by Cdk7 promotes its stability by preventing ubiquitination by the DCX(DCAF12) complex. Post-translationally, ubiquitinated by the DCX(DCAF12) complex, leading to its degradation. Phosphorylation at Ser-146 by Cdk7 prevents ubiquitination by the DCX(DCAF12) complex.

Its subcellular location is the cytoplasm. It is found in the nucleus. Transcriptional coactivator which is the critical downstream regulatory target in the Hippo/SWH (Sav/Wts/Hpo) signaling pathway that plays a pivotal role in organ size control and tumor suppression by restricting proliferation and promoting apoptosis. The core of this pathway is composed of a kinase cascade wherein Hippo (Hpo), in complex with its regulatory protein Salvador (Sav), phosphorylates and activates Warts (Wts) in complex with its regulatory protein Mats, which in turn phosphorylates and inactivates the Yorkie (Yki) oncoprotein. The Hippo/SWH signaling pathway inhibits the activity of the transcriptional complex formed by Scalloped (sd) and Yki and the target genes of this pathway include cyclin-E (cycE), diap1 and bantam. Regulates the expression of G1/S-specific CycE and diap1, thereby promoting cell proliferation and inhibiting apoptosis. Required for transcriptional activity of sd in wing imaginal disks. Induces expression of expression of vestigial (vg) in wing and haltere disks and the expression of transcription factor E2f (E2f). The polypeptide is Transcriptional coactivator yorkie (yki) (Drosophila melanogaster (Fruit fly)).